Consider the following 232-residue polypeptide: Octanoyltransferase (232 aa).

The BPL/LPL catalytic domain maps to 32–219 (DTIYDTLILL…SFMVFNFSSC (188 aa)). Residues 77–84 (RGGDITYH), 140–142 (AIG), and 153–155 (GFA) contribute to the substrate site. Cysteine 171 serves as the catalytic Acyl-thioester intermediate.

This sequence belongs to the LipB family.

The protein resides in the cytoplasm. It catalyses the reaction octanoyl-[ACP] + L-lysyl-[protein] = N(6)-octanoyl-L-lysyl-[protein] + holo-[ACP] + H(+). Its pathway is protein modification; protein lipoylation via endogenous pathway; protein N(6)-(lipoyl)lysine from octanoyl-[acyl-carrier-protein]: step 1/2. Catalyzes the transfer of endogenously produced octanoic acid from octanoyl-acyl-carrier-protein onto the lipoyl domains of lipoate-dependent enzymes. Lipoyl-ACP can also act as a substrate although octanoyl-ACP is likely to be the physiological substrate. The polypeptide is Octanoyltransferase (Dictyoglomus thermophilum (strain ATCC 35947 / DSM 3960 / H-6-12)).